Consider the following 66-residue polypeptide: Potassium channel toxin alpha-KTx 30.1 (66 aa).

The N-terminal stretch at 1-24 (MNTGFFFFVIMATGLVLTFDTIHA) is a signal peptide. 3 disulfide bridges follow: C30-C50, C36-C55, and C40-C57.

It belongs to the short scorpion toxin superfamily. Potassium channel inhibitor family. Alpha-KTx 30 subfamily. As to expression, expressed by the venom gland.

It is found in the secreted. Inhibits Kv1.3/KCNA3 channel (1 uM of the toxin inhibits currents by 64.1%). This is Potassium channel toxin alpha-KTx 30.1 from Scorpiops margerisonae (Scorpion).